The sequence spans 116 residues: Large ribosomal subunit protein uL22c (116 aa).

This sequence belongs to the universal ribosomal protein uL22 family. In terms of assembly, part of the 50S ribosomal subunit.

The protein localises to the plastid. The protein resides in the chloroplast. This protein binds specifically to 23S rRNA. Its function is as follows. The globular domain of the protein is located near the polypeptide exit tunnel on the outside of the subunit, while an extended beta-hairpin is found that lines the wall of the exit tunnel in the center of the 70S ribosome. The sequence is that of Large ribosomal subunit protein uL22c (rpl22) from Euglena gracilis.